A 145-amino-acid polypeptide reads, in one-letter code: Large ribosomal subunit protein uL24 (145 aa).

The disordered stretch occupies residues 108–145 (EPIQEEQQKTEETKQEIAPEEVEAKEAQDKQEVKENDQ). The segment covering 113–145 (EQQKTEETKQEIAPEEVEAKEAQDKQEVKENDQ) has biased composition (basic and acidic residues).

The protein belongs to the universal ribosomal protein uL24 family. Part of the 50S ribosomal subunit.

Functionally, one of two assembly initiator proteins, it binds directly to the 5'-end of the 23S rRNA, where it nucleates assembly of the 50S subunit. Its function is as follows. Located at the polypeptide exit tunnel on the outside of the subunit. In Thermoplasma volcanium (strain ATCC 51530 / DSM 4299 / JCM 9571 / NBRC 15438 / GSS1), this protein is Large ribosomal subunit protein uL24 (rpl24).